Here is a 428-residue protein sequence, read N- to C-terminus: Divergent protein kinase domain 1A (428 aa).

Topologically, residues 1–27 (MARGLFSRAWLSKTHHFQARLSYIRVK) are cytoplasmic. Residues 28–48 (YLFLTWLAVFVSSWVVYVQYS) form a helical membrane-spanning segment. The Lumenal segment spans residues 49-428 (TYTELCRGRE…WKQISHTTDS (380 aa)).

This sequence belongs to the DIPK family. Post-translationally, among the many cysteines in the lumenal domain, most are probably involved in disulfide bonds.

The protein resides in the endoplasmic reticulum membrane. The polypeptide is Divergent protein kinase domain 1A (dipk1a) (Danio rerio (Zebrafish)).